Reading from the N-terminus, the 526-residue chain is Methyltetrahydroprotoberberine 14-monooxygenase (526 aa).

Residues 14-34 (LLLQYLQPISVALVVIALVWN) form a helical membrane-spanning segment. Heme is bound at residue cysteine 468.

This sequence belongs to the cytochrome P450 family. It depends on heme as a cofactor. In terms of tissue distribution, mainly expressed in roots, and barely in stems, leaves and carpels.

The protein localises to the membrane. It carries out the reaction (S)-cis-N-methylcanadine + reduced [NADPH--hemoprotein reductase] + O2 = allocryptopine + oxidized [NADPH--hemoprotein reductase] + H2O + 2 H(+). It catalyses the reaction (S)-cis-N-methylstylopine + reduced [NADPH--hemoprotein reductase] + O2 = protopine + oxidized [NADPH--hemoprotein reductase] + H2O + 2 H(+). The catalysed reaction is (S)-cis-N-methyltetrahydrothalifendine + reduced [NADPH--hemoprotein reductase] + O2 = 7-hydroxy-8-methoxy-11-methyl-17,19-dioxa-11-azatetracyclo[12.7.0.0(4,9).0(16,20)]henicosa-1(21),4(9),5,7,14,16(20)-hexaen-2-one + oxidized [NADPH--hemoprotein reductase] + H2O + 2 H(+). The enzyme catalyses (S)-cis-N-methyltetrahydropalmatine + reduced [NADPH--hemoprotein reductase] + O2 = muramine + oxidized [NADPH--hemoprotein reductase] + H2O + 2 H(+). It functions in the pathway alkaloid biosynthesis. Its activity is regulated as follows. Repressed by cytochrome P450 inhibitors ketoconazole, metyrapone, prochloraz, ancymidol and cytochrome C. Its function is as follows. Involved in the biosynthesis of the isoquinoline alkaloid sanguinarine. Catalyzes the conversion of N-methylated protoberberine alkaloids N-methylstylopine and N-methylcanadine into protopine and allocryptopine, respectively. Can also use (S)-cis-N-methyltetrahydrothalifendine and (S)-cis-N-methyltetrahydropalmatine as substrates. The protein is Methyltetrahydroprotoberberine 14-monooxygenase of Papaver somniferum (Opium poppy).